The following is a 370-amino-acid chain: MRDIDPSLRREIESLERFLKVKPLYFDFDEGVFVWLDTRLIPFREVYRRTSDYRRVARAIVDMEIRGAPAIGVAAAYALALAAAEAASRGGEGFIEALSEARREIESTRPTAYNLFWATARVYGAVSEAFRRSGVDAAVRAGLEEATRIYVEDVRGNVEIGRVGARLLESGDTVLTHCNTGALATAGFGTALGVIRYAWMEGKDIRVITTETRPVLQGARLNVWELRKEGIPFKLVVDSAVGLIMSRGMVSKAIVGADRIVSTGHTANKIGTYMVAMAASRHGVPFYVAAPASTFQPDAGPEAIVIEERSPDEVRGVISEAGYVRITLGDVEAYNPSFDVTPPELITAFITDRGVIEPPFDVNIRRTLED.

Residues 66–68 (RGA), Arg-109, and Gln-217 contribute to the substrate site. Asp-258 acts as the Proton donor in catalysis. 268–269 (NK) contributes to the substrate binding site.

Belongs to the eIF-2B alpha/beta/delta subunits family. MtnA subfamily.

The enzyme catalyses 5-(methylsulfanyl)-alpha-D-ribose 1-phosphate = 5-(methylsulfanyl)-D-ribulose 1-phosphate. Its function is as follows. Catalyzes the interconversion of methylthioribose-1-phosphate (MTR-1-P) into methylthioribulose-1-phosphate (MTRu-1-P). The polypeptide is Putative methylthioribose-1-phosphate isomerase (Aeropyrum pernix (strain ATCC 700893 / DSM 11879 / JCM 9820 / NBRC 100138 / K1)).